The primary structure comprises 252 residues: Flavin-dependent thymidylate synthase (252 aa).

The region spanning 7-235 (LDVQLVACST…PTVFSDFETS (229 aa)) is the ThyX domain. DUMP is bound by residues 94-97 (ELVR), 105-109 (QLSQR), and Arg-174. FAD-binding positions include 97–99 (RHR) and Gln-105. The ThyX motif signature appears at 97–107 (RHRHFSFSQLS). FAD-binding positions include 190-192 (NFR) and His-196. A dUMP-binding site is contributed by Arg-201. Arg-201 (involved in ionization of N3 of dUMP, leading to its activation) is an active-site residue.

This sequence belongs to the thymidylate synthase ThyX family. As to quaternary structure, homotetramer. Requires FAD as cofactor.

The enzyme catalyses dUMP + (6R)-5,10-methylene-5,6,7,8-tetrahydrofolate + NADPH + H(+) = dTMP + (6S)-5,6,7,8-tetrahydrofolate + NADP(+). It functions in the pathway pyrimidine metabolism; dTTP biosynthesis. In terms of biological role, catalyzes the reductive methylation of 2'-deoxyuridine-5'-monophosphate (dUMP) to 2'-deoxythymidine-5'-monophosphate (dTMP) while utilizing 5,10-methylenetetrahydrofolate (mTHF) as the methyl donor, and NADPH and FADH(2) as the reductant. This is Flavin-dependent thymidylate synthase from Corynebacterium diphtheriae (strain ATCC 700971 / NCTC 13129 / Biotype gravis).